The following is a 341-amino-acid chain: S-adenosylmethionine:tRNA ribosyltransferase-isomerase (341 aa).

The protein belongs to the QueA family. Monomer.

Its subcellular location is the cytoplasm. The catalysed reaction is 7-aminomethyl-7-carbaguanosine(34) in tRNA + S-adenosyl-L-methionine = epoxyqueuosine(34) in tRNA + adenine + L-methionine + 2 H(+). It functions in the pathway tRNA modification; tRNA-queuosine biosynthesis. In terms of biological role, transfers and isomerizes the ribose moiety from AdoMet to the 7-aminomethyl group of 7-deazaguanine (preQ1-tRNA) to give epoxyqueuosine (oQ-tRNA). This Alkaliphilus metalliredigens (strain QYMF) protein is S-adenosylmethionine:tRNA ribosyltransferase-isomerase.